We begin with the raw amino-acid sequence, 369 residues long: 3',5'-cyclic-nucleotide phosphodiesterase 1 (369 aa).

It belongs to the cyclic nucleotide phosphodiesterase class-II family.

The enzyme catalyses a nucleoside 3',5'-cyclic phosphate + H2O = a nucleoside 5'-phosphate + H(+). Functionally, controls the level of cAMP in yeast cells, together with the high-affinity cAMP phosphodiesterase (PDE2). The sequence is that of 3',5'-cyclic-nucleotide phosphodiesterase 1 (PDE1) from Saccharomyces cerevisiae (strain ATCC 204508 / S288c) (Baker's yeast).